Reading from the N-terminus, the 310-residue chain is Vomeronasal type-1 receptor 3 (310 aa).

At 1-5 (MASKD) the chain is on the extracellular side. The helical transmembrane segment at 6–26 (FAIGMILSQIMVGFLGNFFLL) threads the bilayer. Residues 27–50 (YHYSFLHFTRGMLQSTDLTLKHLT) lie on the Cytoplasmic side of the membrane. A helical membrane pass occupies residues 51–71 (IANSLVILSKGIPQTMAAFGL). The Extracellular segment spans residues 72–91 (KDSLSDIGCKFVFYVHRVGR). The helical transmembrane segment at 92-112 (AVCTGNACLLSVFQVITISSS) threads the bilayer. The Cytoplasmic portion of the chain corresponds to 113 to 129 (EFRWAELKLHAHKYIRS). Residues 130 to 150 (FILVLCWILNTLVNITVPLHV) form a helical membrane-spanning segment. At 151–186 (TGKWNSINSTKTNDYGYCSGGSRSRIPHSLHIVLLS) the chain is on the extracellular side. An N-linked (GlcNAc...) asparagine glycan is attached at Asn-158. A helical membrane pass occupies residues 187–207 (SLDVLCLGLMTLASGSMVFIL). Residues 208 to 235 (HRLKQQVQHIHGTNLSPRSSPESRVTQS) lie on the Cytoplasmic side of the membrane. A helical transmembrane segment spans residues 236–258 (ILVLVSTLCYFTRSPPSLHMSLF). The Extracellular portion of the chain corresponds to 259–263 (PNPSW). The helical transmembrane segment at 264–284 (WPLNASALITACFPTVSPFVL) threads the bilayer. Topologically, residues 285–310 (MSRHPRIPRLGSACCGRNPQFPKLVR) are cytoplasmic.

It belongs to the G-protein coupled receptor 1 family.

It localises to the cell membrane. Its function is as follows. Putative pheromone receptor. This is Vomeronasal type-1 receptor 3 (VN1R3) from Pan troglodytes (Chimpanzee).